The chain runs to 433 residues: uncharacterized protein (433 aa).

The segment at M1–T126 is methylglyoxal synthase. An MGS-like domain is found at M1 to D145. D62 is an active-site residue. The 136-residue stretch at G127 to P262 folds into the DAGKc domain.

The protein in the N-terminal section; belongs to the methylglyoxal synthase family.

This is an uncharacterized protein from Synechocystis sp. (strain ATCC 27184 / PCC 6803 / Kazusa).